Consider the following 117-residue polypeptide: Large ribosomal subunit protein bL19 (117 aa).

This sequence belongs to the bacterial ribosomal protein bL19 family.

Functionally, this protein is located at the 30S-50S ribosomal subunit interface and may play a role in the structure and function of the aminoacyl-tRNA binding site. This is Large ribosomal subunit protein bL19 from Blochmanniella floridana.